The following is a 285-amino-acid chain: MTVPQLHYVPYDTPVEDVMRILEECGTLVIRNFLDQKTVQNVQNEVDDYVRNWNPGPKYNHDIKTVGSKTKQPSNLSLMSKTYRCEVLNHPWMHAICERMFGPTYGDYWFNGGSILHLEPGEHTQPIHQDHVFYHISKWRRPTDPDLTINFAMALTEFTVENGGTRVCPGSHLWENGHAPPAEEDMVPALMQPGDALILPGSMWHSAGANRSSEYRRGFAASFHPCHFTPIESHHHLPREMVEEMSPLVQKMLGFRTLNLHNNVKVWKAGEGNLEDATGLKSIAV.

His-128, Asp-130, and His-205 together coordinate Fe cation.

This sequence belongs to the PhyH family. As to quaternary structure, homodimer. Requires Fe cation as cofactor.

It participates in secondary metabolite biosynthesis; terpenoid biosynthesis. Dioxygenase; part of the gene cluster that mediates the biosynthesis of anditomin, a fungal meroterpenoid. The first step of the pathway is the synthesis of 3,5-dimethylorsellinic acid (DMOA) by the polyketide synthase andM. DMOA is then converted to the phthalide compound 5,7-dihydroxy-4,6-dimethylphthalide (DHDMP) by the cytochrome P450 monooxygenase andK, which is further prenylated by the prenyltransferase andD to yield farnesyl-DHDMP. Further epoxidation by the FAD-dependent monooxygenase andE leads to epoxyfarnesyl-DHDMP. The next step involves the terpene cyclase andB that converts epoxyfarnesyl-DHDMP into preandiloid A through opening of the epoxide ring followed by the cyclization of the farnesyl moiety. Preandiloid A is in turn oxidized at the C-3 hydroxyl group to yield preandiloid B by the dehydrogenase andC. The dioxygenase andA is solely responsible for the dehydrogenation of preandiloid B leading to the enone preandiloid C, as well as for the intriguing structural rearrangement to generate the bicyclo[2.2.2]octane core, transforming preandiloid C into andiconin. FAD-binding monooxygenase andJ then produces andilesin D which is reduced by dehydrogenase andI to yield andilesin A. Action of acetyltransferase andG followed by a spontaneous acetate elimination leads then to andilesin B, which is in turn substrate of the short chain dehydrogenase andH to yield andilesin C. Finally, the dioxygenase andF catalyzes the transformation of andilesin C to anditomin. This chain is Dioxygenase andF, found in Emericella variicolor (Aspergillus stellatus).